The primary structure comprises 151 residues: UPF0208 membrane protein CKO_00500 (151 aa).

Transmembrane regions (helical) follow at residues Tyr46–Leu65 and Leu69–Gly91.

This sequence belongs to the UPF0208 family.

The protein resides in the cell inner membrane. The sequence is that of UPF0208 membrane protein CKO_00500 from Citrobacter koseri (strain ATCC BAA-895 / CDC 4225-83 / SGSC4696).